Consider the following 469-residue polypeptide: UDP-N-acetylmuramate--L-alanine ligase (469 aa).

Residue 114–120 coordinates ATP; sequence GTHGKTT.

Belongs to the MurCDEF family.

The protein resides in the cytoplasm. It carries out the reaction UDP-N-acetyl-alpha-D-muramate + L-alanine + ATP = UDP-N-acetyl-alpha-D-muramoyl-L-alanine + ADP + phosphate + H(+). The protein operates within cell wall biogenesis; peptidoglycan biosynthesis. In terms of biological role, cell wall formation. This Chlorobium phaeovibrioides (strain DSM 265 / 1930) (Prosthecochloris vibrioformis (strain DSM 265)) protein is UDP-N-acetylmuramate--L-alanine ligase.